The sequence spans 549 residues: Hydroxylamine reductase (549 aa).

[4Fe-4S] cluster-binding residues include C5, C8, C17, and C23. 8 residues coordinate hybrid [4Fe-2O-2S] cluster: H244, E268, C312, C403, C431, C456, E491, and K493. C403 is subject to Cysteine persulfide.

It belongs to the HCP family. It depends on [4Fe-4S] cluster as a cofactor. Hybrid [4Fe-2O-2S] cluster is required as a cofactor.

It localises to the cytoplasm. The catalysed reaction is A + NH4(+) + H2O = hydroxylamine + AH2 + H(+). Functionally, catalyzes the reduction of hydroxylamine to form NH(3) and H(2)O. The polypeptide is Hydroxylamine reductase (Clostridium perfringens (strain 13 / Type A)).